The primary structure comprises 615 residues: Cilia- and flagella-associated protein 52 (615 aa).

11 WD repeats span residues Gly54–Arg98, Leu101–Gly142, Cys145–Arg184, Gly232–Lys275, Ala320–Arg359, Val362–Thr401, Ala405–Glu444, Asp449–Ser488, Phe490–Ile529, Ser533–Val572, and Ala575–Asp614.

The protein belongs to the CFAP52 family.

The protein localises to the cytoplasm. The protein resides in the cell projection. Its subcellular location is the cilium. It localises to the flagellum. May play a role in cell growth and/or survival. This chain is Cilia- and flagella-associated protein 52, found in Chlamydomonas reinhardtii (Chlamydomonas smithii).